The chain runs to 136 residues: Ig kappa chain V-V region MOPC 21 (136 aa).

An N-terminal signal peptide occupies residues 1–29 (MHQTSMGIKMESHTLVFISILLCLYGADG). The framework-1 stretch occupies residues 30-52 (NIVMTQSPKSMSMSVGERVTLTC). A complementarity-determining-1 region spans residues 53–63 (KASENVVTYVS). The interval 64–78 (WYQQKPEQSPKLLIY) is framework-2. The segment at 79–85 (GASNRYT) is complementarity-determining-2. Positions 86–117 (GVPDRFTGSGSATDFTLTISSVQAEDLADYHC) are framework-3. The segment at 118–126 (GQGYSYPYT) is complementarity-determining-3. A framework-4 region spans residues 127 to 136 (FGGGTKLEIK).

The chain is Ig kappa chain V-V region MOPC 21 from Mus musculus (Mouse).